Here is a 343-residue protein sequence, read N- to C-terminus: Holliday junction branch migration complex subunit RuvB (343 aa).

The segment at 4-184 is large ATPase domain (RuvB-L); sequence SDRLISAKAG…FGIVQRLEFY (181 aa). ATP contacts are provided by residues isoleucine 23, arginine 24, glycine 65, lysine 68, threonine 69, threonine 70, 131–133, arginine 174, tyrosine 184, and arginine 221; that span reads EDY. Threonine 69 serves as a coordination point for Mg(2+). The interval 185–255 is small ATPAse domain (RuvB-S); the sequence is NHQDLTHIIT…IADQALNMLK (71 aa). The interval 258 to 343 is head domain (RuvB-H); sequence SQGFDHMDRR…RSGREDDLFE (86 aa). The DNA site is built by arginine 294, arginine 313, and arginine 318.

Belongs to the RuvB family. As to quaternary structure, homohexamer. Forms an RuvA(8)-RuvB(12)-Holliday junction (HJ) complex. HJ DNA is sandwiched between 2 RuvA tetramers; dsDNA enters through RuvA and exits via RuvB. An RuvB hexamer assembles on each DNA strand where it exits the tetramer. Each RuvB hexamer is contacted by two RuvA subunits (via domain III) on 2 adjacent RuvB subunits; this complex drives branch migration. In the full resolvosome a probable DNA-RuvA(4)-RuvB(12)-RuvC(2) complex forms which resolves the HJ.

It localises to the cytoplasm. It carries out the reaction ATP + H2O = ADP + phosphate + H(+). Functionally, the RuvA-RuvB-RuvC complex processes Holliday junction (HJ) DNA during genetic recombination and DNA repair, while the RuvA-RuvB complex plays an important role in the rescue of blocked DNA replication forks via replication fork reversal (RFR). RuvA specifically binds to HJ cruciform DNA, conferring on it an open structure. The RuvB hexamer acts as an ATP-dependent pump, pulling dsDNA into and through the RuvAB complex. RuvB forms 2 homohexamers on either side of HJ DNA bound by 1 or 2 RuvA tetramers; 4 subunits per hexamer contact DNA at a time. Coordinated motions by a converter formed by DNA-disengaged RuvB subunits stimulates ATP hydrolysis and nucleotide exchange. Immobilization of the converter enables RuvB to convert the ATP-contained energy into a lever motion, pulling 2 nucleotides of DNA out of the RuvA tetramer per ATP hydrolyzed, thus driving DNA branch migration. The RuvB motors rotate together with the DNA substrate, which together with the progressing nucleotide cycle form the mechanistic basis for DNA recombination by continuous HJ branch migration. Branch migration allows RuvC to scan DNA until it finds its consensus sequence, where it cleaves and resolves cruciform DNA. This chain is Holliday junction branch migration complex subunit RuvB, found in Marinobacter nauticus (strain ATCC 700491 / DSM 11845 / VT8) (Marinobacter aquaeolei).